Here is a 149-residue protein sequence, read N- to C-terminus: Large ribosomal subunit protein bL9 (149 aa).

Belongs to the bacterial ribosomal protein bL9 family.

Functionally, binds to the 23S rRNA. This chain is Large ribosomal subunit protein bL9, found in Xylella fastidiosa (strain 9a5c).